Consider the following 278-residue polypeptide: Protein lyl-1 (278 aa).

Positions 1 to 46 (MCPPQARAEVGSAMTEKTEMVCASSPAPAPPSKPASPGPLSTEEVD) are disordered. Pro residues predominate over residues 27-37 (APAPPSKPASP). Residues 149–201 (ARRVFTNSRERWRQQHVNGAFAELRKLLPTHPPDRKLSKNEVLRLAMKYIGFL) enclose the bHLH domain. The segment at 212–278 (LTSGPSAPGS…EQTSLSPEVR (67 aa)) is disordered. A compositionally biased stretch (polar residues) spans 269–278 (EQTSLSPEVR). Ser-274 is subject to Phosphoserine.

In terms of assembly, efficient DNA binding requires dimerization with another bHLH protein.

It localises to the nucleus. The polypeptide is Protein lyl-1 (Lyl1) (Mus musculus (Mouse)).